We begin with the raw amino-acid sequence, 160 residues long: 2-C-methyl-D-erythritol 2,4-cyclodiphosphate synthase (160 aa).

Residues aspartate 11 and histidine 13 each contribute to the a divalent metal cation site. 4-CDP-2-C-methyl-D-erythritol 2-phosphate is bound by residues 11–13 and 37–38; these read DVH and HS. Histidine 45 serves as a coordination point for a divalent metal cation. 4-CDP-2-C-methyl-D-erythritol 2-phosphate is bound by residues 59–61 and arginine 145; that span reads DIG.

Belongs to the IspF family. As to quaternary structure, homotrimer. A divalent metal cation is required as a cofactor.

It carries out the reaction 4-CDP-2-C-methyl-D-erythritol 2-phosphate = 2-C-methyl-D-erythritol 2,4-cyclic diphosphate + CMP. The protein operates within isoprenoid biosynthesis; isopentenyl diphosphate biosynthesis via DXP pathway; isopentenyl diphosphate from 1-deoxy-D-xylulose 5-phosphate: step 4/6. In terms of biological role, involved in the biosynthesis of isopentenyl diphosphate (IPP) and dimethylallyl diphosphate (DMAPP), two major building blocks of isoprenoid compounds. Catalyzes the conversion of 4-diphosphocytidyl-2-C-methyl-D-erythritol 2-phosphate (CDP-ME2P) to 2-C-methyl-D-erythritol 2,4-cyclodiphosphate (ME-CPP) with a corresponding release of cytidine 5-monophosphate (CMP). The sequence is that of 2-C-methyl-D-erythritol 2,4-cyclodiphosphate synthase from Neisseria meningitidis serogroup A / serotype 4A (strain DSM 15465 / Z2491).